A 231-amino-acid chain; its full sequence is Flagellar L-ring protein (231 aa).

The first 18 residues, 1–18, serve as a signal peptide directing secretion; the sequence is MNRFICVLALSGSAVLAG. C19 is lipidated: N-palmitoyl cysteine. A lipid anchor (S-diacylglycerol cysteine) is attached at C19.

The protein belongs to the FlgH family. The basal body constitutes a major portion of the flagellar organelle and consists of four rings (L,P,S, and M) mounted on a central rod.

It localises to the cell outer membrane. The protein localises to the bacterial flagellum basal body. Functionally, assembles around the rod to form the L-ring and probably protects the motor/basal body from shearing forces during rotation. The chain is Flagellar L-ring protein from Pseudomonas fluorescens (strain ATCC BAA-477 / NRRL B-23932 / Pf-5).